A 525-amino-acid chain; its full sequence is Cytochrome P450 4V2 (525 aa).

The helical transmembrane segment at 13-33 (LLLWGAASAVSLAGASLVLSL) threads the bilayer. Heme is bound by residues E329 and C467.

Belongs to the cytochrome P450 family. Heme is required as a cofactor.

It is found in the endoplasmic reticulum membrane. It carries out the reaction dodecanoate + reduced [NADPH--hemoprotein reductase] + O2 = 12-hydroxydodecanoate + oxidized [NADPH--hemoprotein reductase] + H2O + H(+). The catalysed reaction is tetradecanoate + reduced [NADPH--hemoprotein reductase] + O2 = 14-hydroxytetradecanoate + oxidized [NADPH--hemoprotein reductase] + H2O + H(+). It catalyses the reaction hexadecanoate + reduced [NADPH--hemoprotein reductase] + O2 = 16-hydroxyhexadecanoate + oxidized [NADPH--hemoprotein reductase] + H2O + H(+). The enzyme catalyses (5Z,8Z,11Z,14Z,17Z)-eicosapentaenoate + reduced [NADPH--hemoprotein reductase] + O2 = 20-hydroxy-(5Z,8Z,11Z,14Z,17Z)-eicosapentaenoate + oxidized [NADPH--hemoprotein reductase] + H2O + H(+). It carries out the reaction (4Z,7Z,10Z,13Z,16Z,19Z)-docosahexaenoate + reduced [NADPH--hemoprotein reductase] + O2 = 22-hydroxy-(4Z,7Z,10Z,13Z,16Z,19Z)-docosahexaenoate + oxidized [NADPH--hemoprotein reductase] + H2O + H(+). It participates in lipid metabolism; fatty acid metabolism. Its activity is regulated as follows. Inhibited by N-hydroxy-N'-(4-n-butyl-2-methylphenyl formamidine)(HET0016) with an IC(50) of 38 nM. In terms of biological role, a cytochrome P450 monooxygenase involved in fatty acid metabolism in the eye. Catalyzes the omega-hydroxylation of polyunsaturated fatty acids (PUFAs) docosahexaenoate (DHA) and its precursor eicosapentaenoate (EPA), and may contribute to the homeostasis of these retinal PUFAs. Omega hydroxylates saturated fatty acids such as laurate, myristate and palmitate, the catalytic efficiency decreasing in the following order: myristate &gt; laurate &gt; palmitate (C14&gt;C12&gt;C16). Mechanistically, uses molecular oxygen inserting one oxygen atom into a substrate, and reducing the second into a water molecule, with two electrons provided by NADPH via cytochrome P450 reductase (CPR; NADPH-ferrihemoprotein reductase). This is Cytochrome P450 4V2 (CYP4V2) from Pongo abelii (Sumatran orangutan).